We begin with the raw amino-acid sequence, 216 residues long: Probable nicotinate-nucleotide adenylyltransferase (216 aa).

The protein belongs to the NadD family.

It catalyses the reaction nicotinate beta-D-ribonucleotide + ATP + H(+) = deamido-NAD(+) + diphosphate. Its pathway is cofactor biosynthesis; NAD(+) biosynthesis; deamido-NAD(+) from nicotinate D-ribonucleotide: step 1/1. Its function is as follows. Catalyzes the reversible adenylation of nicotinate mononucleotide (NaMN) to nicotinic acid adenine dinucleotide (NaAD). This is Probable nicotinate-nucleotide adenylyltransferase from Maridesulfovibrio salexigens (strain ATCC 14822 / DSM 2638 / NCIMB 8403 / VKM B-1763) (Desulfovibrio salexigens).